The sequence spans 77 residues: Small ribosomal subunit protein bS20 (77 aa).

This sequence belongs to the bacterial ribosomal protein bS20 family.

Binds directly to 16S ribosomal RNA. The polypeptide is Small ribosomal subunit protein bS20 (Lactococcus lactis subsp. lactis (strain IL1403) (Streptococcus lactis)).